Reading from the N-terminus, the 328-residue chain is MTRLAIALGDPAGIGAEVVLKALAHRPSLNPLLVGCRQWLQASYEQLLPCCHEPLADPSQLEILDEPLTEAITPGSISAAAGAASFGWLTRATEAVLDGRAQALVTAPIAKTAWHQAGHHYPGQTERLAELCGCDDAAMLFTARSPQSGWRFNTLLATTHIPLSSVPAALTPERLERRLGQLEDFCRRFRQRPRLRVAGLNPHAGEAGQLGTEEQRWITACLQAYQQRHNNLQLEGPVPPDTCWLGAAQAWNDSQHVEEGCDGYLALYHDQGLIPVKVLAFDQAVNTTLGLPFLRTSPDHGTGFDRAGQGSARGASMLAAIDTAVELG.

Threonine 125 contacts substrate. Residues histidine 160, histidine 203, and histidine 269 each contribute to the a divalent metal cation site. Residues lysine 277, asparagine 286, and arginine 295 each contribute to the substrate site.

Belongs to the PdxA family. As to quaternary structure, homodimer. A divalent metal cation is required as a cofactor.

It localises to the cytoplasm. It carries out the reaction 4-(phosphooxy)-L-threonine + NAD(+) = 3-amino-2-oxopropyl phosphate + CO2 + NADH. It participates in cofactor biosynthesis; pyridoxine 5'-phosphate biosynthesis; pyridoxine 5'-phosphate from D-erythrose 4-phosphate: step 4/5. Functionally, catalyzes the NAD(P)-dependent oxidation of 4-(phosphooxy)-L-threonine (HTP) into 2-amino-3-oxo-4-(phosphooxy)butyric acid which spontaneously decarboxylates to form 3-amino-2-oxopropyl phosphate (AHAP). This Synechococcus sp. (strain RCC307) protein is 4-hydroxythreonine-4-phosphate dehydrogenase.